Reading from the N-terminus, the 103-residue chain is Flagellar hook-basal body complex protein FliE (103 aa).

It belongs to the FliE family.

The protein resides in the bacterial flagellum basal body. The polypeptide is Flagellar hook-basal body complex protein FliE (Helicobacter hepaticus (strain ATCC 51449 / 3B1)).